The chain runs to 265 residues: Dimethylsulfide dehydrogenase subunit gamma (265 aa).

Residues 1–25 (MPGFRFLLAATAAFLATSPALPLSA) form the signal peptide. Residues His81 and Met147 each coordinate heme b.

As to quaternary structure, heterotrimer of alpha, beta and gamma subunits. Heme b serves as cofactor.

The protein resides in the periplasm. May transfer electrons to the iron-sulfur centers of DdhB. This chain is Dimethylsulfide dehydrogenase subunit gamma (ddhC), found in Rhodovulum sulfidophilum (Rhodobacter sulfidophilus).